A 162-amino-acid polypeptide reads, in one-letter code: NADH-quinone oxidoreductase subunit I (162 aa).

4Fe-4S ferredoxin-type domains lie at 54–83 and 93–122; these read RRYE…INST and SSYE…ETNI. Residues C63, C66, C69, C73, C102, C105, C108, and C112 each contribute to the [4Fe-4S] cluster site.

This sequence belongs to the complex I 23 kDa subunit family. As to quaternary structure, NDH-1 is composed of 14 different subunits. Subunits NuoA, H, J, K, L, M, N constitute the membrane sector of the complex. [4Fe-4S] cluster serves as cofactor.

The protein resides in the cell inner membrane. The catalysed reaction is a quinone + NADH + 5 H(+)(in) = a quinol + NAD(+) + 4 H(+)(out). In terms of biological role, NDH-1 shuttles electrons from NADH, via FMN and iron-sulfur (Fe-S) centers, to quinones in the respiratory chain. The immediate electron acceptor for the enzyme in this species is believed to be ubiquinone. Couples the redox reaction to proton translocation (for every two electrons transferred, four hydrogen ions are translocated across the cytoplasmic membrane), and thus conserves the redox energy in a proton gradient. The chain is NADH-quinone oxidoreductase subunit I from Francisella tularensis subsp. tularensis (strain FSC 198).